An 85-amino-acid chain; its full sequence is UPF0335 protein BQ12070 (85 aa).

This sequence belongs to the UPF0335 family.

The protein is UPF0335 protein BQ12070 of Bartonella quintana (strain Toulouse) (Rochalimaea quintana).